The primary structure comprises 142 residues: Large ribosomal subunit protein uL11 (142 aa).

Belongs to the universal ribosomal protein uL11 family. As to quaternary structure, part of the ribosomal stalk of the 50S ribosomal subunit. Interacts with L10 and the large rRNA to form the base of the stalk. L10 forms an elongated spine to which L12 dimers bind in a sequential fashion forming a multimeric L10(L12)X complex. One or more lysine residues are methylated.

Its function is as follows. Forms part of the ribosomal stalk which helps the ribosome interact with GTP-bound translation factors. In Rhodospirillum rubrum (strain ATCC 11170 / ATH 1.1.1 / DSM 467 / LMG 4362 / NCIMB 8255 / S1), this protein is Large ribosomal subunit protein uL11.